We begin with the raw amino-acid sequence, 507 residues long: Arabinose import ATP-binding protein AraG (507 aa).

ABC transporter domains follow at residues 8 to 243 (LSFH…MVGR) and 255 to 499 (PHGE…MLRI). 40-47 (GENGAGKS) contributes to the ATP binding site.

The protein belongs to the ABC transporter superfamily. Arabinose importer (TC 3.A.1.2.2) family. In terms of assembly, the complex is composed of two ATP-binding proteins (AraG), two transmembrane proteins (AraH) and a solute-binding protein (AraF).

It localises to the cell inner membrane. The enzyme catalyses L-arabinose(out) + ATP + H2O = L-arabinose(in) + ADP + phosphate + H(+). In terms of biological role, part of the ABC transporter complex AraFGH involved in arabinose import. Responsible for energy coupling to the transport system. The chain is Arabinose import ATP-binding protein AraG from Pectobacterium atrosepticum (strain SCRI 1043 / ATCC BAA-672) (Erwinia carotovora subsp. atroseptica).